The following is a 292-amino-acid chain: 4-hydroxy-tetrahydrodipicolinate synthase (292 aa).

A pyruvate-binding site is contributed by threonine 45. The Proton donor/acceptor role is filled by tyrosine 133. The active-site Schiff-base intermediate with substrate is lysine 162. Isoleucine 204 lines the pyruvate pocket.

The protein belongs to the DapA family. Homotetramer; dimer of dimers.

The protein localises to the cytoplasm. It carries out the reaction L-aspartate 4-semialdehyde + pyruvate = (2S,4S)-4-hydroxy-2,3,4,5-tetrahydrodipicolinate + H2O + H(+). It participates in amino-acid biosynthesis; L-lysine biosynthesis via DAP pathway; (S)-tetrahydrodipicolinate from L-aspartate: step 3/4. Catalyzes the condensation of (S)-aspartate-beta-semialdehyde [(S)-ASA] and pyruvate to 4-hydroxy-tetrahydrodipicolinate (HTPA). The chain is 4-hydroxy-tetrahydrodipicolinate synthase from Maridesulfovibrio salexigens (strain ATCC 14822 / DSM 2638 / NCIMB 8403 / VKM B-1763) (Desulfovibrio salexigens).